Here is a 305-residue protein sequence, read N- to C-terminus: MRVAFFGTPLWAVPVLDALRKRHQVVLVVSQPDKPQGRGLRPAPSPVARYAEAEGLPLLRPARLREEAFLEALRQAAPEVAVVAAYGKLIPKEALDIPPHGFLNLHPSLLPKYRGAAPVQRALLAGERETGVSIMRLDEGLDTGPLYAVWRTPILPDEDAVALGNRLRDKGVELLLEVLERLPELTPRPQEGEVSYAPPLSKEEGRLDFGESAEALYRRHRAVQPWPGSYFFHRGRRVKALRLRPEPGEGEPGVVARVGPEGVAVGTASGLLLLLEVQPEGRRAMPAADWARGYGVAPGTRLGQV.

108-111 provides a ligand contact to (6S)-5,6,7,8-tetrahydrofolate; sequence SLLP.

Belongs to the Fmt family.

It carries out the reaction L-methionyl-tRNA(fMet) + (6R)-10-formyltetrahydrofolate = N-formyl-L-methionyl-tRNA(fMet) + (6S)-5,6,7,8-tetrahydrofolate + H(+). Its function is as follows. Attaches a formyl group to the free amino group of methionyl-tRNA(fMet). The formyl group appears to play a dual role in the initiator identity of N-formylmethionyl-tRNA by promoting its recognition by IF2 and preventing the misappropriation of this tRNA by the elongation apparatus. The polypeptide is Methionyl-tRNA formyltransferase (Thermus thermophilus (strain ATCC BAA-163 / DSM 7039 / HB27)).